Here is a 547-residue protein sequence, read N- to C-terminus: Glutamyl-tRNA(Gln) amidotransferase subunit B, mitochondrial (547 aa).

This sequence belongs to the GatB/GatE family. GatB subfamily. As to quaternary structure, subunit of the heterotrimeric GatFAB amidotransferase (AdT) complex, composed of A, B and F subunits.

It localises to the mitochondrion. The catalysed reaction is L-glutamyl-tRNA(Gln) + L-glutamine + ATP + H2O = L-glutaminyl-tRNA(Gln) + L-glutamate + ADP + phosphate + H(+). Its function is as follows. Allows the formation of correctly charged Gln-tRNA(Gln) through the transamidation of misacylated Glu-tRNA(Gln) in the mitochondria. The reaction takes place in the presence of glutamine and ATP through an activated gamma-phospho-Glu-tRNA(Gln). This chain is Glutamyl-tRNA(Gln) amidotransferase subunit B, mitochondrial, found in Lachancea thermotolerans (strain ATCC 56472 / CBS 6340 / NRRL Y-8284) (Yeast).